The following is a 428-amino-acid chain: NADP-specific glutamate dehydrogenase (428 aa).

Lys-68 and Lys-92 together coordinate substrate. Residue Lys-104 is the Proton donor of the active site. Residues Thr-188 and Asn-219 each contribute to the NADP(+) site. Ser-356 provides a ligand contact to substrate.

It belongs to the Glu/Leu/Phe/Val dehydrogenases family. Homohexamer.

The catalysed reaction is L-glutamate + NADP(+) + H2O = 2-oxoglutarate + NH4(+) + NADPH + H(+). Catalyzes the reversible oxidative deamination of glutamate to alpha-ketoglutarate and ammonia. This is NADP-specific glutamate dehydrogenase (gdhA) from Synechocystis sp. (strain ATCC 27184 / PCC 6803 / Kazusa).